We begin with the raw amino-acid sequence, 217 residues long: Flagellin B1 (217 aa).

Residues 1-12 (MKVFEFLKGKRG) constitute a propeptide that is removed on maturation.

It belongs to the archaeal flagellin family.

Its subcellular location is the archaeal flagellum. Its function is as follows. Flagellin is the subunit protein which polymerizes to form the filaments of archaeal flagella. The sequence is that of Flagellin B1 (flaB1) from Methanocaldococcus jannaschii (strain ATCC 43067 / DSM 2661 / JAL-1 / JCM 10045 / NBRC 100440) (Methanococcus jannaschii).